The following is a 648-amino-acid chain: MSEKIYDVPAEWAKRAWVDQAKYKEMYARSISDPNGFWAEQAKRIDWMKAPTKIENVSFAPGNVSIKWFEDGVLNVAHNCIDRHLHKRANQTAIIWEGDDPSQSRHITYKELHDEVCRMANILRTRNVKKGDRVTIYLPMIPEAAYAMLACARIGAIHSVVFAGFSPDSLAQRINDCQSKVIITADEGLRGGKKVPLKANVDAALAKADGVDWVVVVKRTGGKIDMNPTRDLWYHEAAAMVTTECPVEHMHAEDPLFILYTSGSTGQPKGVLHTSAGYLVYAAMTHQYVFDYHDGDIYWCTADVGWVTGHSYILYGPLANGATTLMFEGVPNYPDNSRFWNVIDKHKVNTFYTAPTAIRALMQGGDEPVKKTSRASLRLLGSVGEPINPEAWEWYHRVVGEDRCPIVDTWWQTETGGILITPLPGATKLKPGSATQPFFGVVPEIVDADGKVLEGETTGNLCLTRAWPGMMRTVYGDHARFEQTYFSTYKGKYFTGDGCRRDADGYYWITGRVDDVINVSGHRMGTAEVESALVAHEKVSEAAVVGFPHDIKGQGIYAYVTLMAGVQPTEDLRKELVTWVRKEIGPIASPDQIQFAPGLPKTRSGKIMRRILRKIAEDEPGSLGDTSTLADPAVVDDLVKNRQNKKSA.

Residues 190–193, Thr-308, and Asn-332 contribute to the CoA site; that span reads RGGK. ATP contacts are provided by residues 384 to 386, 408 to 413, Asp-497, and Arg-512; these read GEP and DTWWQT. CoA is bound at residue Ser-520. ATP is bound at residue Arg-523. 3 residues coordinate Mg(2+): Val-534, His-536, and Val-539. Arg-581 contacts CoA. Lys-606 is subject to N6-acetyllysine.

Belongs to the ATP-dependent AMP-binding enzyme family. Mg(2+) is required as a cofactor. Post-translationally, acetylated. Deacetylation by the SIR2-homolog deacetylase activates the enzyme.

It carries out the reaction acetate + ATP + CoA = acetyl-CoA + AMP + diphosphate. In terms of biological role, catalyzes the conversion of acetate into acetyl-CoA (AcCoA), an essential intermediate at the junction of anabolic and catabolic pathways. AcsA undergoes a two-step reaction. In the first half reaction, AcsA combines acetate with ATP to form acetyl-adenylate (AcAMP) intermediate. In the second half reaction, it can then transfer the acetyl group from AcAMP to the sulfhydryl group of CoA, forming the product AcCoA. This is Acetyl-coenzyme A synthetase from Bradyrhizobium diazoefficiens (strain JCM 10833 / BCRC 13528 / IAM 13628 / NBRC 14792 / USDA 110).